The chain runs to 285 residues: 2-dehydro-3-deoxyphosphooctonate aldolase (285 aa).

This sequence belongs to the KdsA family.

It localises to the cytoplasm. It catalyses the reaction D-arabinose 5-phosphate + phosphoenolpyruvate + H2O = 3-deoxy-alpha-D-manno-2-octulosonate-8-phosphate + phosphate. Its pathway is carbohydrate biosynthesis; 3-deoxy-D-manno-octulosonate biosynthesis; 3-deoxy-D-manno-octulosonate from D-ribulose 5-phosphate: step 2/3. It functions in the pathway bacterial outer membrane biogenesis; lipopolysaccharide biosynthesis. This is 2-dehydro-3-deoxyphosphooctonate aldolase from Polaromonas naphthalenivorans (strain CJ2).